We begin with the raw amino-acid sequence, 327 residues long: Glycerol-3-phosphate dehydrogenase [NAD(P)+] (327 aa).

Residues Trp16, Arg36, and Lys108 each coordinate NADPH. Residues Lys108, Gly136, and Ser138 each contribute to the sn-glycerol 3-phosphate site. Residue Ala140 participates in NADPH binding. Positions 191, 244, 254, 255, and 256 each coordinate sn-glycerol 3-phosphate. Lys191 functions as the Proton acceptor in the catalytic mechanism. Arg255 serves as a coordination point for NADPH. The NADPH site is built by Leu274 and Glu276.

This sequence belongs to the NAD-dependent glycerol-3-phosphate dehydrogenase family.

The protein resides in the cytoplasm. The enzyme catalyses sn-glycerol 3-phosphate + NAD(+) = dihydroxyacetone phosphate + NADH + H(+). It catalyses the reaction sn-glycerol 3-phosphate + NADP(+) = dihydroxyacetone phosphate + NADPH + H(+). It functions in the pathway membrane lipid metabolism; glycerophospholipid metabolism. Functionally, catalyzes the reduction of the glycolytic intermediate dihydroxyacetone phosphate (DHAP) to sn-glycerol 3-phosphate (G3P), the key precursor for phospholipid synthesis. The chain is Glycerol-3-phosphate dehydrogenase [NAD(P)+] from Bradyrhizobium sp. (strain ORS 278).